A 448-amino-acid chain; its full sequence is Beclin-1 (448 aa).

Met-1 carries the N-acetylmethionine modification. Phosphoserine occurs at positions 14 and 29. Residues 47-66 (TTAQAKPGETQEEEANSGEE) form a disordered region. Ser-88, Ser-91, and Ser-94 each carry phosphoserine; by AMPK. Residues 106 to 125 (TMENLSRRLKVTGDLFDIMS) carry the BH3 motif. Residues 110 to 157 (LSRRLKVTGDLFDIMSGQTDVDHPLCEECTDTLLDQLDTQLNVTENEC) are interaction with BCL2 and BCL2L1 isoform Bcl-X(L). Residue Thr-117 is modified to Phosphothreonine; by DAPK1. Residues 140 to 268 (DTLLDQLDTQ…LDKLKKTNVF (129 aa)) adopt a coiled-coil conformation. Residues 243-448 (DELKSVENQV…AWVSSQFYNK (206 aa)) form an evolutionary conserved domain (ECD) region. Residues Lys-400 and Lys-435 each participate in a glycyl lysine isopeptide (Lys-Gly) (interchain with G-Cter in ubiquitin) cross-link. Positions 423–448 (WTKALKFMLTNLKWGLAWVSSQFYNK) are required for membrane-association.

This sequence belongs to the beclin family. As to quaternary structure, a homodimeric form is proposed to exist; this metastable form readily transits to ATG14- or UVRAG-containing complexes with BECN1:UVRAG being more stable than BECN1:ATG14. Component of the PI3K (PI3KC3/PI3K-III/class III phosphatidylinositol 3-kinase) complex whose core is composed of the catalytic subunit PIK3C3, the regulatory subunit PIK3R4 and BECN1, and associates with additional regulatory/auxiliary subunits to form alternative complex forms. Accepted alternative complex forms containing a fourth regulatory subunit in a mutually exclusive manner are PI3K complex I (PI3KC3-C1) containing ATG14, and PI3K complex II (PI3KC3-C2) containing UVRAG. PI3KC3-C1 displays a V-shaped architecture with PIK3R4 serving as a bridge between PIK3C3 and the ATG14:BECN1 subcomplex. Both, PI3KC3-C1 and PI3KC3-C2, can associate with further regulatory subunits, such as RUBCN, SH3GLB1/Bif-1 and AMBRA1. PI3KC3-C1 probably associates with PIK3CB. Forms a complex with PPP2CA and AMBRA1; AMBRA1 and BECN1 components of the complex regulate MYC stability via different pathways. Component of the complex, at least composed of LRPPRC, BECN1 and BCL2; the interactions prevent BECN1 from forming an autophagy-inducing complex with PIK3C3. Interacts with AMBRA1, GOPC, GRID2 and PIK3CB. Interacts with BCL2 and BCL2L1 isoform Bcl-X(L); the interaction inhibits BECN1 function in promoting autophagy by interfering with the formation of the PI3K complex. Interacts with cytosolic HMGB1; inhibits the interaction of BECN1 and BCL2 leading to promotion of autophagy. Interacts with USP10, USP13, VMP1, DAPK1. Interacts with the poly-Gln domain of ATXN3; the interaction causes deubiquitination at Lys-400 and stabilizes BECN1. Interacts with SLAMF1. Interacts with TRIM5; the interaction causes activation of BECN1 by causing its dissociation from its inhibitors BCL2 and TAB2. Interacts with active ULK1 (phosphorylated on 'Ser-317') and MEFV simultaneously. Interacts with TRIM50. Interacts with TRIM16. Interacts with WDR81 and WDR91; negatively regulates the PI3 kinase/PI3K activity associated with endosomal membranes. Interacts with LAPTM4B; competes with EGFR for LAPTM4B binding; regulates EGFR activity. Interacts with ATG14; this interaction is increased in the absence of TMEM39A. Interacts with WASHC1; preventing interaction with AMBRA1 and the DCX(AMBRA1) complex and subsequent ubiquitination. Interacts with TRIM17. Interacts with BCL2L10/BCL-B (via BH1 domain). Interacts with SH3BGRL. Interacts with Irgm1; enhancing BECN1-interacting partners and influencing the composition of the BECN1 complex. Interacts with ARMC3. Interacts with LRPPRC. In terms of assembly, (Microbial infection) Interacts with murine gammaherpesvirus 68 M11; the viral protein binds BECN1 with higher affinity than cellular BCL2. Phosphorylation at Thr-117 by DAPK1 reduces its interaction with BCL2 and BCL2L1 and promotes induction of autophagy. In response to autophagic stimuli, phosphorylated at serine residues by AMPK in an ATG14-dependent manner, and this phosphorylation is critical for maximally efficient autophagy. In terms of processing, polyubiquitinated by NEDD4, both with 'Lys-11'- and 'Lys-63'-linkages. 'Lys-11'-linked polyubiquitination leads to degradation and is enhanced when the stabilizing interaction partner VPS34 is depleted. Deubiquitinated by USP10 and USP13, leading to stabilize the PIK3C3/VPS34-containing complexes. Polyubiquitinated at Lys-400 with 'Lys-48'-linkages. 'Lys-48'-linked poyubiquitination of Lys-400 leads to degradation. Deubiquitinated by ATXN3, leading to stabilization. Ubiquitinated at Lys-435 via 'Lys-63'-linkage by the DCX(AMBRA1) complex, thereby increasing the association between BECN1 and PIK3C3 to promote PIK3C3 activity. 'Lys-48'-linked ubiquitination by RNF216 leads to proteasomal degradation and autophagy inhibition. Post-translationally, proteolytically processed by caspases including CASP8 and CASP3; the C-terminal fragments lack autophagy-inducing capacity and are proposed to induce apoptosis. Thus the cleavage is proposed to be an determinant to switch from autophagy to apoptosis pathways affecting cellular homeostasis including viral infections and survival of tumor cells.

It localises to the cytoplasm. It is found in the golgi apparatus. Its subcellular location is the trans-Golgi network membrane. The protein localises to the endosome membrane. The protein resides in the endoplasmic reticulum membrane. It localises to the mitochondrion membrane. It is found in the endosome. Its subcellular location is the cytoplasmic vesicle. The protein localises to the autophagosome. The protein resides in the mitochondrion. It localises to the nucleus. Plays a central role in autophagy. Acts as a core subunit of different PI3K complex forms that mediate formation of phosphatidylinositol 3-phosphate and are believed to play a role in multiple membrane trafficking pathways: PI3KC3-C1 is involved in initiation of autophagosomes and PI3KC3-C2 in maturation of autophagosomes and endocytosis. Involved in regulation of degradative endocytic trafficking and required for the abscission step in cytokinesis, probably in the context of PI3KC3-C2. Essential for the formation of PI3KC3-C2 but not PI3KC3-C1 PI3K complex forms. Involved in endocytosis including endosome formation in neuronal cells. May play a role in antiviral host defense. Functionally, beclin-1-C 35 kDa localized to mitochondria can promote apoptosis; it induces the mitochondrial translocation of BAX and the release of proapoptotic factors. The chain is Beclin-1 (Becn1) from Mus musculus (Mouse).